The following is a 130-amino-acid chain: Small ribosomal subunit protein uS8 (130 aa).

The protein belongs to the universal ribosomal protein uS8 family. As to quaternary structure, part of the 30S ribosomal subunit.

Its function is as follows. One of the primary rRNA binding proteins, it binds directly to 16S rRNA central domain where it helps coordinate assembly of the platform of the 30S subunit. The sequence is that of Small ribosomal subunit protein uS8 from Methanococcus vannielii (strain ATCC 35089 / DSM 1224 / JCM 13029 / OCM 148 / SB).